The chain runs to 71 residues: DNA-directed RNA polymerase subunit 10-like protein (71 aa).

Zn(2+)-binding residues include Cys7, Cys10, Cys44, and Cys45.

The protein belongs to the archaeal Rpo10/eukaryotic RPB10 RNA polymerase subunit family. Interacts with IYO.

The protein resides in the nucleus. In Arabidopsis thaliana (Mouse-ear cress), this protein is DNA-directed RNA polymerase subunit 10-like protein.